A 738-amino-acid chain; its full sequence is Junction plakoglobin (738 aa).

ARM repeat units follow at residues 128–167 (NYQD…QLSK), 168–211 (KEAS…LSHH), 212–251 (REGL…NLLL), 254–293 (EGAK…LLAY), 294–337 (GNQE…LSVC), 338–377 (PSNK…NLSD), 379–416 (ATKQ…NLTC), 419–460 (GRNK…HLTS), 466–506 (EVAQ…NLAL), 508–547 (PANH…QPYT), 570–609 (PVNR…ELAQ), and 611–657 (KEAA…ADYR).

Belongs to the beta-catenin family. In terms of assembly, homodimer.

Its subcellular location is the cell junction. It is found in the adherens junction. The protein resides in the desmosome. The protein localises to the cytoplasm. It localises to the cytoskeleton. Its subcellular location is the membrane. Functionally, common junctional plaque protein. The membrane-associated plaques are architectural elements in an important strategic position to influence the arrangement and function of both the cytoskeleton and the cells within the tissue. The presence of plakoglobin in both the desmosomes and in the intermediate junctions suggests that it plays a central role in the structure and function of submembranous plaques. The chain is Junction plakoglobin (jup) from Xenopus laevis (African clawed frog).